A 141-amino-acid chain; its full sequence is Vesicle-associated membrane protein 4 (141 aa).

The segment at 1-51 (MPPKFKRHLNDDDVTGSVKSERRNLLEDDSDEEEDFFLRGPSGPRFGPRND) is disordered. Topologically, residues 1–118 (MPPKFKRHLN…MWWRGCKIKA (118 aa)) are cytoplasmic. Residues S17 and S30 each carry the phosphoserine modification. Residues 52-112 (KIKHVQNQVD…KQLRRQMWWR (61 aa)) form the v-SNARE coiled-coil homology domain. The helical; Anchor for type IV membrane protein transmembrane segment at 119–139 (IMALAAAILLLMIIILIVVKF) threads the bilayer. The Vesicular segment spans residues 140–141 (RT).

Belongs to the synaptobrevin family. Identified in a complex containing STX6, STX12, VAMP4 and VTI1A. Interacts with BAIAP3; this interaction is increased in the presence of calcium. (Microbial infection) Targeted and hydrolyzed by C.botulinum neurotoxin type X (BoNT/X) which hydrolyzes the 87-Arg-|-Ser-88 bond and probably inhibits neurotransmitter release. It remains unknown whether BoNT/X is ever produced, or what organisms it targets.

The protein localises to the golgi apparatus. Its subcellular location is the trans-Golgi network membrane. Its function is as follows. Involved in the pathway that functions to remove an inhibitor (probably synaptotagmin-4) of calcium-triggered exocytosis during the maturation of secretory granules. May be a marker for this sorting pathway that is critical for remodeling the secretory response of granule. The chain is Vesicle-associated membrane protein 4 (Vamp4) from Mus musculus (Mouse).